The chain runs to 96 residues: UPF0298 protein LCA_1075 (96 aa).

The protein belongs to the UPF0298 family.

The protein resides in the cytoplasm. In Latilactobacillus sakei subsp. sakei (strain 23K) (Lactobacillus sakei subsp. sakei), this protein is UPF0298 protein LCA_1075.